The following is a 151-amino-acid chain: UPF0756 membrane protein GTNG_2661 (151 aa).

Helical transmembrane passes span 5–25, 53–73, 86–106, and 116–136; these read VLFL…SLII, WGVT…EIGF, WIAL…VMLL, and LVLG…GPLI.

This sequence belongs to the UPF0756 family.

It is found in the cell membrane. The polypeptide is UPF0756 membrane protein GTNG_2661 (Geobacillus thermodenitrificans (strain NG80-2)).